Here is a 72-residue protein sequence, read N- to C-terminus: Translation initiation factor IF-1 (72 aa).

In terms of domain architecture, S1-like spans 1–72 (MSKSDYIELE…TKGRIIFRHK (72 aa)).

It belongs to the IF-1 family. In terms of assembly, component of the 30S ribosomal translation pre-initiation complex which assembles on the 30S ribosome in the order IF-2 and IF-3, IF-1 and N-formylmethionyl-tRNA(fMet); mRNA recruitment can occur at any time during PIC assembly.

Its subcellular location is the cytoplasm. Functionally, one of the essential components for the initiation of protein synthesis. Stabilizes the binding of IF-2 and IF-3 on the 30S subunit to which N-formylmethionyl-tRNA(fMet) subsequently binds. Helps modulate mRNA selection, yielding the 30S pre-initiation complex (PIC). Upon addition of the 50S ribosomal subunit IF-1, IF-2 and IF-3 are released leaving the mature 70S translation initiation complex. The protein is Translation initiation factor IF-1 of Ruthia magnifica subsp. Calyptogena magnifica.